Reading from the N-terminus, the 341-residue chain is Malate dehydrogenase, mitochondrial (341 aa).

NAD(+) is bound by residues glycine 35 to glycine 41 and aspartate 61. Substrate-binding residues include arginine 108 and arginine 114. Residues asparagine 121 and isoleucine 144–asparagine 146 contribute to the NAD(+) site. Substrate is bound by residues asparagine 146 and arginine 180. Catalysis depends on histidine 204, which acts as the Proton acceptor. Methionine 255 contributes to the NAD(+) binding site.

It belongs to the LDH/MDH superfamily. MDH type 1 family. In terms of assembly, homodimer.

It is found in the mitochondrion matrix. It catalyses the reaction (S)-malate + NAD(+) = oxaloacetate + NADH + H(+). Catalyzes the reversible conversion of (S)-malate to oxaloacetate in the citric acid cycle. The chain is Malate dehydrogenase, mitochondrial from Caenorhabditis elegans.